The following is a 630-amino-acid chain: Zinc finger protein MSN4 (630 aa).

Met1 is modified (N-acetylmethionine). Residues 37–56 are compositionally biased toward low complexity; it reads TTNVSATSSNDNSANNSISS. Disordered regions lie at residues 37–77 and 115–137; these read TTNV…ATNT and FVND…DKIY. Ser178 carries the phosphoserine modification. The short motif at 237-245 is the 9aaTAD element; that stretch reads SILEDFVSS. At Ser263 the chain carries Phosphoserine. A compositionally biased stretch (polar residues) spans 292-303; it reads KNSSNSKPTQQI. Disordered stretches follow at residues 292–322 and 360–379; these read KNSS…SPTT and SISS…RQQR. Ser316 and Ser319 each carry phosphoserine. Residues 360-373 show a composition bias toward low complexity; it reads SISSSLNRISHSSS. At Thr479 the chain carries Phosphothreonine. Residues 502–566 form a disordered region; that stretch reads TSQAHHAAQH…KSITTIDPNN (65 aa). A compositionally biased stretch (low complexity) spans 504–515; it reads QAHHAAQHHQQQ. Composition is skewed to polar residues over residues 516 to 525 and 532 to 547; these read PTKQATVSPN and SSVT…NNNG. Ser558 is modified (phosphoserine). C2H2-type zinc fingers lie at residues 573-596 and 602-624; these read FKCK…RSVH and FACM…LKTH.

It is found in the cytoplasm. The protein localises to the nucleus. In terms of biological role, positive transcriptional factor that acts as a component of the stress responsive system. Recognizes and binds to the stress response element (STRE) which is involved in the response to various forms of stress (heat, oxidative, osmotic, etc.). Involved in the regulation of the CTT1, DDR2, HSP12 genes. The polypeptide is Zinc finger protein MSN4 (MSN4) (Saccharomyces cerevisiae (strain ATCC 204508 / S288c) (Baker's yeast)).